Reading from the N-terminus, the 851-residue chain is Probable alpha,alpha-trehalose-phosphate synthase [UDP-forming] 7 (851 aa).

At Ser-5 the chain carries Phosphoserine. Position 32 is a phosphothreonine (Thr-32). Residues 59–540 (DRMIIVANRL…SRSFLQDLER (482 aa)) are glycosyltransferase.

This sequence in the N-terminal section; belongs to the glycosyltransferase 20 family. It in the C-terminal section; belongs to the trehalose phosphatase family. As to quaternary structure, binds to the phosphopeptide-binding site of GRF/14-3-3. In terms of processing, phosphorylated. In terms of tissue distribution, expressed in seedlings, leaves, roots, stems, flowers and siliques.

It catalyses the reaction D-glucose 6-phosphate + UDP-alpha-D-glucose = alpha,alpha-trehalose 6-phosphate + UDP + H(+). This chain is Probable alpha,alpha-trehalose-phosphate synthase [UDP-forming] 7 (TPS7), found in Arabidopsis thaliana (Mouse-ear cress).